Here is a 337-residue protein sequence, read N- to C-terminus: DNA-directed RNA polymerase subunit alpha (337 aa).

Residues 1–233 (MVREDVVGST…DLLIPFLHAE (233 aa)) form an alpha N-terminal domain (alpha-NTD) region. Positions 265–337 (KGIPLTCIFI…FAINLLNKKL (73 aa)) are alpha C-terminal domain (alpha-CTD).

It belongs to the RNA polymerase alpha chain family. In terms of assembly, in plastids the minimal PEP RNA polymerase catalytic core is composed of four subunits: alpha, beta, beta', and beta''. When a (nuclear-encoded) sigma factor is associated with the core the holoenzyme is formed, which can initiate transcription.

Its subcellular location is the plastid. It localises to the chloroplast. The enzyme catalyses RNA(n) + a ribonucleoside 5'-triphosphate = RNA(n+1) + diphosphate. DNA-dependent RNA polymerase catalyzes the transcription of DNA into RNA using the four ribonucleoside triphosphates as substrates. The sequence is that of DNA-directed RNA polymerase subunit alpha from Phalaenopsis aphrodite subsp. formosana (Moth orchid).